A 333-amino-acid chain; its full sequence is Eukaryotic translation initiation factor 2 subunit 2 (333 aa).

Disordered stretches follow at residues Met1–Lys87, Ile98–Leu117, and Glu141–Pro165. Ser2 bears the N-acetylserine mark. Phosphoserine occurs at positions 2 and 13. Positions Ser13–Pro22 are enriched in basic residues. Residue Thr36 is modified to Phosphothreonine. Residues Glu40–Asp51 show a composition bias toward basic and acidic residues. Residue Ser67 is modified to Phosphoserine. Lys102 participates in a covalent cross-link: Glycyl lysine isopeptide (Lys-Gly) (interchain with G-Cter in SUMO2). The residue at position 105 (Ser105) is a Phosphoserine. Residues Asp106–Leu117 are compositionally biased toward acidic residues. Phosphoserine occurs at positions 158 and 218. An N6-acetyllysine mark is found at Lys265 and Lys293. The segment at Cys281–Cys305 adopts a C4-type zinc-finger fold.

The protein belongs to the eIF-2-beta/eIF-5 family. In terms of assembly, eukaryotic translation initiation factor 2 eIF2 is a heterotrimeric complex composed of an alpha (EIF2S1), a beta (EIF2S2) and a gamma (EIF2S3) chain. eIF2 is member of the 43S pre-initiation complex (43S PIC). eIF2 forms a complex with at least CELF1/CUGBP1, CALR, CALR3, EIF2S1, EIF2S2, HSP90B1 and HSPA5. Interacts with BZW2/5MP1. Interacts with EIF5.

The protein localises to the cytoplasm. The protein resides in the cytosol. Component of the eIF2 complex that functions in the early steps of protein synthesis by forming a ternary complex with GTP and initiator tRNA. This complex binds to a 40S ribosomal subunit, followed by mRNA binding to form a 43S pre-initiation complex (43S PIC). Junction of the 60S ribosomal subunit to form the 80S initiation complex is preceded by hydrolysis of the GTP bound to eIF2 and release of an eIF2-GDP binary complex. In order for eIF2 to recycle and catalyze another round of initiation, the GDP bound to eIF2 must exchange with GTP by way of a reaction catalyzed by eIF2B. The chain is Eukaryotic translation initiation factor 2 subunit 2 (EIF2S2) from Bos taurus (Bovine).